A 369-amino-acid chain; its full sequence is Phospho-N-acetylmuramoyl-pentapeptide-transferase (369 aa).

Helical transmembrane passes span L30–M50, G74–W94, L97–F117, I136–A156, Y177–A197, G208–V228, G244–W264, I272–A292, I297–V317, and T346–L366.

The protein belongs to the glycosyltransferase 4 family. MraY subfamily. Requires Mg(2+) as cofactor.

Its subcellular location is the cell inner membrane. The enzyme catalyses UDP-N-acetyl-alpha-D-muramoyl-L-alanyl-gamma-D-glutamyl-meso-2,6-diaminopimeloyl-D-alanyl-D-alanine + di-trans,octa-cis-undecaprenyl phosphate = di-trans,octa-cis-undecaprenyl diphospho-N-acetyl-alpha-D-muramoyl-L-alanyl-D-glutamyl-meso-2,6-diaminopimeloyl-D-alanyl-D-alanine + UMP. It participates in cell wall biogenesis; peptidoglycan biosynthesis. Functionally, catalyzes the initial step of the lipid cycle reactions in the biosynthesis of the cell wall peptidoglycan: transfers peptidoglycan precursor phospho-MurNAc-pentapeptide from UDP-MurNAc-pentapeptide onto the lipid carrier undecaprenyl phosphate, yielding undecaprenyl-pyrophosphoryl-MurNAc-pentapeptide, known as lipid I. In Phenylobacterium zucineum (strain HLK1), this protein is Phospho-N-acetylmuramoyl-pentapeptide-transferase.